A 926-amino-acid polypeptide reads, in one-letter code: Isoleucine--tRNA ligase (926 aa).

The disordered stretch occupies residues 1 to 21; the sequence is MKMKETLQLGKTAFPMRGNLP. A 'HIGH' region motif is present at residues 57–67; sequence PYANGNIHLGH. Position 552 (glutamate 552) interacts with L-isoleucyl-5'-AMP. The short motif at 593-597 is the 'KMSKS' region element; that stretch reads KMSKS. Position 596 (lysine 596) interacts with ATP. Zn(2+) is bound by residues cysteine 886, cysteine 889, cysteine 906, and cysteine 909.

The protein belongs to the class-I aminoacyl-tRNA synthetase family. IleS type 1 subfamily. Monomer. It depends on Zn(2+) as a cofactor.

The protein resides in the cytoplasm. It carries out the reaction tRNA(Ile) + L-isoleucine + ATP = L-isoleucyl-tRNA(Ile) + AMP + diphosphate. In terms of biological role, catalyzes the attachment of isoleucine to tRNA(Ile). As IleRS can inadvertently accommodate and process structurally similar amino acids such as valine, to avoid such errors it has two additional distinct tRNA(Ile)-dependent editing activities. One activity is designated as 'pretransfer' editing and involves the hydrolysis of activated Val-AMP. The other activity is designated 'posttransfer' editing and involves deacylation of mischarged Val-tRNA(Ile). The protein is Isoleucine--tRNA ligase of Enterococcus faecalis (strain ATCC 700802 / V583).